The primary structure comprises 354 residues: Methionine aminotransferase BCAT4 (354 aa).

Residue lysine 198 is modified to N6-(pyridoxal phosphate)lysine.

The protein belongs to the class-IV pyridoxal-phosphate-dependent aminotransferase family. Requires pyridoxal 5'-phosphate as cofactor. Mostly expressed in phloem.

Its subcellular location is the cytoplasm. It catalyses the reaction a 2-oxocarboxylate + L-methionine = 4-methylsulfanyl-2-oxobutanoate + an L-alpha-amino acid. Its function is as follows. Converts 2-oxo acids to branched-chain amino acids. Shows activity with L-Leu, L-Ile and L-Val as amino donors and alpha-keto-glutarate as an amino acceptor, but no activity for D-isomers of Leu, Ile, Val, Asp, Glu or Ala. Acts on methionine and its derivatives and the corresponding 2-oxo acids. Catalyzes the initial deamination of methionine to 4-methylthio-2-oxobutyrate as well as the transamination of other typical intermediates of the methionine chain elongation pathway. The polypeptide is Methionine aminotransferase BCAT4 (BCAT4) (Arabidopsis thaliana (Mouse-ear cress)).